The following is a 475-amino-acid chain: Doublecortin domain-containing protein 2 (475 aa).

2 Doublecortin domains span residues 17–100 (KSVL…LNYL) and 139–221 (CTIF…LPYS). A disordered region spans residues 234 to 475 (YGQKASSLPP…ESNKASSAVA (242 aa)). Positions 252 to 272 (GSGNYRQSKSTIGSSDNSSPQ) are enriched in polar residues. Position 270 is a phosphoserine (serine 270). Positions 353–365 (EKTSKDANQKDDF) are enriched in basic and acidic residues. Acidic residues predominate over residues 407-419 (TDEENGEELDQVT). Over residues 455–475 (TVTSPQENEGNESNKASSAVA) the composition is skewed to polar residues.

As to quaternary structure, interacts with DVL1, DVL2 and DVL3. As to expression, expressed in hair cells of the inner ear.

It localises to the cell projection. Its subcellular location is the cilium. The protein localises to the cytoplasm. The protein resides in the cytoskeleton. It is found in the cilium axoneme. It localises to the kinocilium. Its function is as follows. Protein that plays a role in the inhibition of canonical Wnt signaling pathway. May be involved in neuronal migration during development of the cerebral neocortex. Involved in the control of ciliogenesis and ciliary length. In Rattus norvegicus (Rat), this protein is Doublecortin domain-containing protein 2 (Dcdc2).